A 161-amino-acid polypeptide reads, in one-letter code: Chorion class B protein L12 (161 aa).

The signal sequence occupies residues 1–21 (MAAKLILFVCATALVAQSVLS). Residues 22-52 (IGCGCGGRGYGGLGYGGLGYGGLGGGCGRGF) are left arm. 3 tandem repeats follow at residues 30–34 (GYGGL), 35–39 (GYGGL), and 40–44 (GYGGL). The interval 30-44 (GYGGLGYGGLGYGGL) is 3 X 5 AA tandem repeats of G-Y-G-G-L. The central domain stretch occupies residues 53 to 121 (SGGGLPVATA…GNGAVGITRE (69 aa)). The tract at residues 122 to 161 (GGFGYGAGYGDGYGLGFGGYGGGYGLGNGGYGGCGCGWGY) is right arm (Gly-rich tandem repeats).

This sequence belongs to the chorion protein family.

Its function is as follows. This protein is one of many from the eggshell of the silk moth. This chain is Chorion class B protein L12, found in Bombyx mori (Silk moth).